A 284-amino-acid chain; its full sequence is Bifunctional protein FolD (284 aa).

NADP(+) contacts are provided by residues 166 to 168 (GAS) and Ile-232.

The protein belongs to the tetrahydrofolate dehydrogenase/cyclohydrolase family. Homodimer.

It catalyses the reaction (6R)-5,10-methylene-5,6,7,8-tetrahydrofolate + NADP(+) = (6R)-5,10-methenyltetrahydrofolate + NADPH. The catalysed reaction is (6R)-5,10-methenyltetrahydrofolate + H2O = (6R)-10-formyltetrahydrofolate + H(+). It functions in the pathway one-carbon metabolism; tetrahydrofolate interconversion. In terms of biological role, catalyzes the oxidation of 5,10-methylenetetrahydrofolate to 5,10-methenyltetrahydrofolate and then the hydrolysis of 5,10-methenyltetrahydrofolate to 10-formyltetrahydrofolate. The polypeptide is Bifunctional protein FolD (Shewanella oneidensis (strain ATCC 700550 / JCM 31522 / CIP 106686 / LMG 19005 / NCIMB 14063 / MR-1)).